Here is a 218-residue protein sequence, read N- to C-terminus: Elongation factor Ts (218 aa).

Residues 82 to 85 are involved in Mg(2+) ion dislocation from EF-Tu; it reads TDFV.

It belongs to the EF-Ts family.

The protein resides in the cytoplasm. Associates with the EF-Tu.GDP complex and induces the exchange of GDP to GTP. It remains bound to the aminoacyl-tRNA.EF-Tu.GTP complex up to the GTP hydrolysis stage on the ribosome. The chain is Elongation factor Ts from Prochlorococcus marinus (strain MIT 9312).